The chain runs to 389 residues: Phosphoglycerate kinase (389 aa).

Residues 21 to 23, R36, 59 to 62, R112, and R145 contribute to the substrate site; these read DLN and HLGR. Residues K196, E313, and 342-345 each bind ATP; that span reads GGDT.

This sequence belongs to the phosphoglycerate kinase family. As to quaternary structure, monomer.

It is found in the cytoplasm. The catalysed reaction is (2R)-3-phosphoglycerate + ATP = (2R)-3-phospho-glyceroyl phosphate + ADP. It functions in the pathway carbohydrate degradation; glycolysis; pyruvate from D-glyceraldehyde 3-phosphate: step 2/5. This chain is Phosphoglycerate kinase, found in Histophilus somni (strain 2336) (Haemophilus somnus).